The primary structure comprises 615 residues: Pre-hexon-linking protein IIIa (615 aa).

The segment at methionine 1 to asparagine 92 is peripentonal hexon-tethering domain. The interval serine 124–aspartate 238 is binding to hexon-linking protein. Serine 212 is modified (phosphoserine; by host). Threonine 262 bears the Phosphothreonine; by host mark. Residues glutamate 400–proline 409 show a composition bias toward basic and acidic residues. Disordered stretches follow at residues glutamate 400–serine 473 and glycine 528–lysine 615. 2 stretches are compositionally biased toward low complexity: residues proline 419–serine 430 and serine 451–serine 460. Serine 451 carries the post-translational modification Phosphoserine; by host. A compositionally biased stretch (basic and acidic residues) spans arginine 539–alanine 548. Residues proline 557–serine 570 are compositionally biased toward low complexity. Residues glycine 602–lysine 615 constitute a propeptide that is removed on maturation.

It belongs to the adenoviridae hexon-linking protein IIIa family. In terms of assembly, interacts with hexon proteins; this interaction tethers the peripentonal hexons to hexons situated in the facet. Interacts with the penton protein (via N-terminus). Interacts with packaging protein 3; this interaction is required to promote correct genome packaging. Cleaved near the C-terminus by the viral protease during virion maturation to form the mature protein.

The protein localises to the virion. The protein resides in the host nucleus. Its function is as follows. Structural component of the virion that acts as a cement protein on the capsid exterior which mediates the interactions between the hexons, including the peripentonal hexons, and reaches all the way to the penton vertices. Two hexon linking proteins IIIa, one from each facet, stabilize the unique edge interface between a pair of facets. As the virus enters the host cell, hexon linking proteins IIIa are shed concomitant with virion acidification in the endosome. During virus assembly, seems to play a role in the serotype specificity of the packaging of viral DNA via its interaction with packaging protein 3. The sequence is that of Pre-hexon-linking protein IIIa from Snake adenovirus serotype 1 (SnAdV-1).